Here is a 122-residue protein sequence, read N- to C-terminus: Holo-[acyl-carrier-protein] synthase (122 aa).

2 residues coordinate Mg(2+): D8 and E57.

Belongs to the P-Pant transferase superfamily. AcpS family. The cofactor is Mg(2+).

The protein localises to the cytoplasm. The catalysed reaction is apo-[ACP] + CoA = holo-[ACP] + adenosine 3',5'-bisphosphate + H(+). In terms of biological role, transfers the 4'-phosphopantetheine moiety from coenzyme A to a Ser of acyl-carrier-protein. The chain is Holo-[acyl-carrier-protein] synthase from Protochlamydia amoebophila (strain UWE25).